The primary structure comprises 276 residues: Cell division protein FtsQ (276 aa).

The Cytoplasmic segment spans residues 1-11; the sequence is MQYILKLKYYL. Residues 12–32 form a helical membrane-spanning segment; that stretch reads YNITWKLVFICVMLVLLIVGI. Residues 33–276 are Periplasmic-facing; sequence HKNIKWVCDY…NVSKGSHDYD (244 aa). The 71-residue stretch at 45-115 folds into the POTRA domain; that stretch reads GPLSYIIVTG…NTLKINLIEY (71 aa).

The protein belongs to the FtsQ/DivIB family. FtsQ subfamily. Part of a complex composed of FtsB, FtsL and FtsQ.

The protein resides in the cell inner membrane. In terms of biological role, essential cell division protein. May link together the upstream cell division proteins, which are predominantly cytoplasmic, with the downstream cell division proteins, which are predominantly periplasmic. May control correct divisome assembly. This is Cell division protein FtsQ from Blochmanniella floridana.